We begin with the raw amino-acid sequence, 328 residues long: Methionyl-tRNA formyltransferase (328 aa).

Position 121 to 124 (serine 121 to proline 124) interacts with (6S)-5,6,7,8-tetrahydrofolate.

This sequence belongs to the Fmt family.

The enzyme catalyses L-methionyl-tRNA(fMet) + (6R)-10-formyltetrahydrofolate = N-formyl-L-methionyl-tRNA(fMet) + (6S)-5,6,7,8-tetrahydrofolate + H(+). Its function is as follows. Attaches a formyl group to the free amino group of methionyl-tRNA(fMet). The formyl group appears to play a dual role in the initiator identity of N-formylmethionyl-tRNA by promoting its recognition by IF2 and preventing the misappropriation of this tRNA by the elongation apparatus. In Paraburkholderia xenovorans (strain LB400), this protein is Methionyl-tRNA formyltransferase.